Here is a 481-residue protein sequence, read N- to C-terminus: Proline--tRNA ligase (481 aa).

It belongs to the class-II aminoacyl-tRNA synthetase family. ProS type 3 subfamily. Homodimer.

It localises to the cytoplasm. The catalysed reaction is tRNA(Pro) + L-proline + ATP = L-prolyl-tRNA(Pro) + AMP + diphosphate. Its function is as follows. Catalyzes the attachment of proline to tRNA(Pro) in a two-step reaction: proline is first activated by ATP to form Pro-AMP and then transferred to the acceptor end of tRNA(Pro). In Chloroherpeton thalassium (strain ATCC 35110 / GB-78), this protein is Proline--tRNA ligase.